A 524-amino-acid chain; its full sequence is Glucose-6-phosphate isomerase (524 aa).

Catalysis depends on E322, which acts as the Proton donor. Active-site residues include H351 and K453.

Belongs to the GPI family.

It localises to the cytoplasm. It catalyses the reaction alpha-D-glucose 6-phosphate = beta-D-fructose 6-phosphate. It functions in the pathway carbohydrate biosynthesis; gluconeogenesis. It participates in carbohydrate degradation; glycolysis; D-glyceraldehyde 3-phosphate and glycerone phosphate from D-glucose: step 2/4. Its function is as follows. Catalyzes the reversible isomerization of glucose-6-phosphate to fructose-6-phosphate. This is Glucose-6-phosphate isomerase from Prochlorococcus marinus (strain NATL2A).